The following is a 127-amino-acid chain: Small ribosomal subunit protein uS13 (127 aa).

Residues 92–127 (HRMGLPVRGQRTRTNARTRRGVRRTVAGKKKASAKK) form a disordered region. The segment covering 101-127 (QRTRTNARTRRGVRRTVAGKKKASAKK) has biased composition (basic residues).

The protein belongs to the universal ribosomal protein uS13 family. Part of the 30S ribosomal subunit. Forms a loose heterodimer with protein S19. Forms two bridges to the 50S subunit in the 70S ribosome.

Its function is as follows. Located at the top of the head of the 30S subunit, it contacts several helices of the 16S rRNA. In the 70S ribosome it contacts the 23S rRNA (bridge B1a) and protein L5 of the 50S subunit (bridge B1b), connecting the 2 subunits; these bridges are implicated in subunit movement. Contacts the tRNAs in the A and P-sites. In Trichodesmium erythraeum (strain IMS101), this protein is Small ribosomal subunit protein uS13.